The primary structure comprises 533 residues: Phosphatidylinositol 4-kinase gamma 8 (533 aa).

A PI3K/PI4K catalytic domain is found at 101 to 397 (GAQPLLLPSG…AVSGSDDDDD (297 aa)). Residues 107 to 113 (LPSGLGG) are G-loop. ATP-binding positions include 108 to 114 (PSGLGGA), lysine 129, and 210 to 213 (QRFV). The interval 243 to 251 (LNLDRHAGN) is catalytic loop. Residues 276–302 (PIDHGLCLPECLDDPYFEWLNWPQASV) form an activation loop region. Aspartate 278 lines the ATP pocket.

The protein belongs to the PI3/PI4-kinase family. Type II PI4K subfamily.

The catalysed reaction is a 1,2-diacyl-sn-glycero-3-phospho-(1D-myo-inositol) + ATP = a 1,2-diacyl-sn-glycero-3-phospho-(1D-myo-inositol 4-phosphate) + ADP + H(+). Its function is as follows. The phosphorylation of phosphatidylinositol (PI) to PI4P is the first committed step in the generation of phosphatidylinositol 4,5-bisphosphate (PIP2), a precursor of the second messenger inositol 1,4,5-trisphosphate (InsP3). This chain is Phosphatidylinositol 4-kinase gamma 8 (PI4KG8), found in Arabidopsis thaliana (Mouse-ear cress).